The chain runs to 256 residues: Small ribosomal subunit protein eS1 (256 aa).

Alanine 2 carries the N-acetylalanine; partial modification.

The protein belongs to the eukaryotic ribosomal protein eS1 family. As to quaternary structure, component of the small ribosomal subunit. Mature ribosomes consist of a small (40S) and a large (60S) subunit. The 40S subunit contains about 33 different proteins and 1 molecule of RNA (18S). The 60S subunit contains about 49 different proteins and 3 molecules of RNA (25S, 5.8S and 5S).

The protein localises to the cytoplasm. The chain is Small ribosomal subunit protein eS1 from Lentinula edodes (Shiitake mushroom).